Here is a 254-residue protein sequence, read N- to C-terminus: Small ribosomal subunit protein uS3 (254 aa).

The KH type-2 domain maps to 39 to 109 (IRNYISARLK…EVKIDVIEVI (71 aa)). Residues 220-254 (EEMKKMQERRNDSRGRGRGDGRGAKRRRRPAAKKA) are disordered. The segment covering 221–242 (EMKKMQERRNDSRGRGRGDGRG) has biased composition (basic and acidic residues). A compositionally biased stretch (basic residues) spans 243–254 (AKRRRRPAAKKA).

Belongs to the universal ribosomal protein uS3 family. In terms of assembly, part of the 30S ribosomal subunit. Forms a tight complex with proteins S10 and S14.

Its function is as follows. Binds the lower part of the 30S subunit head. Binds mRNA in the 70S ribosome, positioning it for translation. This is Small ribosomal subunit protein uS3 from Chlorobaculum parvum (strain DSM 263 / NCIMB 8327) (Chlorobium vibrioforme subsp. thiosulfatophilum).